Here is a 283-residue protein sequence, read N- to C-terminus: Ribose-phosphate pyrophosphokinase (283 aa).

ATP-binding positions include 34–36 and 89–90; these read DGE and RQ. Residues histidine 120 and aspartate 159 each coordinate Mg(2+). Lysine 182 is an active-site residue. The D-ribose 5-phosphate site is built by arginine 184 and aspartate 208.

It belongs to the ribose-phosphate pyrophosphokinase family. Class III (archaeal) subfamily. Mg(2+) is required as a cofactor.

The protein localises to the cytoplasm. The enzyme catalyses D-ribose 5-phosphate + ATP = 5-phospho-alpha-D-ribose 1-diphosphate + AMP + H(+). The protein operates within metabolic intermediate biosynthesis; 5-phospho-alpha-D-ribose 1-diphosphate biosynthesis; 5-phospho-alpha-D-ribose 1-diphosphate from D-ribose 5-phosphate (route I): step 1/1. Involved in the biosynthesis of the central metabolite phospho-alpha-D-ribosyl-1-pyrophosphate (PRPP) via the transfer of pyrophosphoryl group from ATP to 1-hydroxyl of ribose-5-phosphate (Rib-5-P). The sequence is that of Ribose-phosphate pyrophosphokinase from Methanosarcina acetivorans (strain ATCC 35395 / DSM 2834 / JCM 12185 / C2A).